Reading from the N-terminus, the 370-residue chain is Histidinol-phosphate aminotransferase 1 (370 aa).

The residue at position 222 (Lys222) is an N6-(pyridoxal phosphate)lysine.

Belongs to the class-II pyridoxal-phosphate-dependent aminotransferase family. Histidinol-phosphate aminotransferase subfamily. As to quaternary structure, homodimer. The cofactor is pyridoxal 5'-phosphate.

It carries out the reaction L-histidinol phosphate + 2-oxoglutarate = 3-(imidazol-4-yl)-2-oxopropyl phosphate + L-glutamate. It participates in amino-acid biosynthesis; L-histidine biosynthesis; L-histidine from 5-phospho-alpha-D-ribose 1-diphosphate: step 7/9. This is Histidinol-phosphate aminotransferase 1 (hisC1) from Bacillus anthracis.